A 278-amino-acid chain; its full sequence is 4-deoxy-L-threo-5-hexosulose-uronate ketol-isomerase (278 aa).

Zn(2+) is bound by residues histidine 196, histidine 198, glutamate 203, and histidine 245.

This sequence belongs to the KduI family. Zn(2+) is required as a cofactor.

It carries out the reaction 5-dehydro-4-deoxy-D-glucuronate = 3-deoxy-D-glycero-2,5-hexodiulosonate. The protein operates within glycan metabolism; pectin degradation; 2-dehydro-3-deoxy-D-gluconate from pectin: step 4/5. Functionally, catalyzes the isomerization of 5-dehydro-4-deoxy-D-glucuronate to 3-deoxy-D-glycero-2,5-hexodiulosonate. The polypeptide is 4-deoxy-L-threo-5-hexosulose-uronate ketol-isomerase (Edwardsiella ictaluri (strain 93-146)).